Consider the following 453-residue polypeptide: Allantoinase (453 aa).

Residues H59, H61, K146, H186, H242, and D315 each contribute to the Zn(2+) site. K146 carries the post-translational modification N6-carboxylysine.

Belongs to the metallo-dependent hydrolases superfamily. Allantoinase family. In terms of assembly, homotetramer. It depends on Zn(2+) as a cofactor. Carboxylation allows a single lysine to coordinate two zinc ions.

The enzyme catalyses (S)-allantoin + H2O = allantoate + H(+). It participates in nitrogen metabolism; (S)-allantoin degradation; allantoate from (S)-allantoin: step 1/1. Catalyzes the conversion of allantoin (5-ureidohydantoin) to allantoic acid by hydrolytic cleavage of the five-member hydantoin ring. This chain is Allantoinase, found in Salmonella paratyphi B (strain ATCC BAA-1250 / SPB7).